Consider the following 23-residue polypeptide: Brevinin-1Eb (23 aa).

Residues cysteine 17 and cysteine 23 are joined by a disulfide bond.

This sequence belongs to the frog skin active peptide (FSAP) family. Brevinin subfamily. As to expression, expressed by the skin glands.

The protein localises to the secreted. Functionally, shows antibacterial activity against representative Gram-negative and Gram-positive bacterial species, and a very high hemolytic activity. This is Brevinin-1Eb from Pelophylax lessonae (Pool frog).